We begin with the raw amino-acid sequence, 270 residues long: NAD kinase (270 aa).

Asp-49 (proton acceptor) is an active-site residue. NAD(+)-binding positions include Asp-49 to Gly-50, Arg-54, Asn-126 to Glu-127, Arg-152, Asp-154, Thr-165 to Ser-170, Ala-189, and Gln-227.

This sequence belongs to the NAD kinase family. It depends on a divalent metal cation as a cofactor.

The protein localises to the cytoplasm. The catalysed reaction is NAD(+) + ATP = ADP + NADP(+) + H(+). Functionally, involved in the regulation of the intracellular balance of NAD and NADP, and is a key enzyme in the biosynthesis of NADP. Catalyzes specifically the phosphorylation on 2'-hydroxyl of the adenosine moiety of NAD to yield NADP. The protein is NAD kinase of Lactococcus lactis subsp. cremoris (strain SK11).